We begin with the raw amino-acid sequence, 352 residues long: Small ribosomal subunit biogenesis GTPase RsgA (352 aa).

One can recognise a CP-type G domain in the interval 109-277 (DTVLKRPDMY…LIDSPGIREF (169 aa)). GTP is bound by residues 165-168 (NKAD) and 219-227 (GQSGVGKSS). The Zn(2+) site is built by cysteine 301, cysteine 306, histidine 308, and cysteine 314.

The protein belongs to the TRAFAC class YlqF/YawG GTPase family. RsgA subfamily. Monomer. Associates with 30S ribosomal subunit, binds 16S rRNA. The cofactor is Zn(2+).

It is found in the cytoplasm. Its function is as follows. One of several proteins that assist in the late maturation steps of the functional core of the 30S ribosomal subunit. Helps release RbfA from mature subunits. May play a role in the assembly of ribosomal proteins into the subunit. Circularly permuted GTPase that catalyzes slow GTP hydrolysis, GTPase activity is stimulated by the 30S ribosomal subunit. In Alcanivorax borkumensis (strain ATCC 700651 / DSM 11573 / NCIMB 13689 / SK2), this protein is Small ribosomal subunit biogenesis GTPase RsgA.